Consider the following 268-residue polypeptide: uncharacterized protein (268 aa).

3 helical membrane passes run 169–189, 190–210, and 225–245; these read AIIY…QGFA, GVKT…LWLL, and IFAG…LSVF.

It localises to the cell membrane. This is an uncharacterized protein from Bacillus subtilis (strain 168).